Consider the following 163-residue polypeptide: Calmodulin (163 aa).

At alanine 2 the chain carries N-acetylalanine. EF-hand domains follow at residues glutamate 11–asparagine 46, proline 47–glutamate 82, aspartate 84–lysine 119, and leucine 120–aspartate 155. Ca(2+) is bound by residues aspartate 24, aspartate 26, aspartate 28, threonine 30, glutamate 35, aspartate 60, aspartate 62, asparagine 64, threonine 66, glutamate 71, aspartate 97, aspartate 99, asparagine 101, glutamate 108, aspartate 133, aspartate 135, aspartate 137, glutamine 139, and glutamate 144.

This sequence belongs to the calmodulin family. As to quaternary structure, associates with the spoke-associated complex containing CFAP61, CFAP91 and CFAP251; the association is calcium sensitive. Post-translationally, trimethylation of Lys-119 observed in other calmodulins is absent here.

The protein localises to the cytoplasm. The protein resides in the cytoskeleton. Its subcellular location is the flagellum axoneme. In terms of biological role, calmodulin mediates the control of a large number of enzymes, ion channels and other proteins by Ca(2+). Among the enzymes to be stimulated by the calmodulin-Ca(2+) complex are a number of protein kinases and phosphatases. This chain is Calmodulin, found in Chlamydomonas reinhardtii (Chlamydomonas smithii).